We begin with the raw amino-acid sequence, 219 residues long: Dual specificity phosphatase 29 (219 aa).

Positions 53–201 (HVNEVWPKLY…LRELDRQLVQ (149 aa)) constitute a Tyrosine-protein phosphatase domain. A substrate-binding site is contributed by 145-152 (HCVMGRSR). Catalysis depends on Cys146, which acts as the Phosphocysteine intermediate.

It belongs to the protein-tyrosine phosphatase family. Non-receptor class dual specificity subfamily. Homodimer. Interacts with PRKAA2.

Its subcellular location is the cytoplasm. The protein localises to the nucleus. The enzyme catalyses O-phospho-L-tyrosyl-[protein] + H2O = L-tyrosyl-[protein] + phosphate. It catalyses the reaction O-phospho-L-seryl-[protein] + H2O = L-seryl-[protein] + phosphate. It carries out the reaction O-phospho-L-threonyl-[protein] + H2O = L-threonyl-[protein] + phosphate. Dual specificity phosphatase able to dephosphorylate phosphotyrosine, phosphoserine and phosphothreonine residues within the same substrate, with a preference for phosphotyrosine as a substrate. Involved in the modulation of intracellular signaling cascades. May regulate glucose metabolism by activating, AMPK, an energy sensor protein kinase. Affects MAP kinase signaling though modulation of the ERK1/2 cascade in skeletal muscle promoting muscle cell differentiation, development and atrophy. The sequence is that of Dual specificity phosphatase 29 (DUSP29) from Bos taurus (Bovine).